A 397-amino-acid polypeptide reads, in one-letter code: Bifunctional enzyme IspD/IspF (397 aa).

The segment at 1-236 (MSIAAVILAA…QKKMQMFPDI (236 aa)) is 2-C-methyl-D-erythritol 4-phosphate cytidylyltransferase. Residues 237-397 (RTGNGYDVHS…NVLYPGEIPK (161 aa)) form a 2-C-methyl-D-erythritol 2,4-cyclodiphosphate synthase region. A divalent metal cation is bound by residues Asp243 and His245. 4-CDP-2-C-methyl-D-erythritol 2-phosphate contacts are provided by residues 243–245 (DVH) and 269–270 (HS). His277 is an a divalent metal cation binding site. 4-CDP-2-C-methyl-D-erythritol 2-phosphate-binding positions include 291–293 (DIG), 367–370 (TTNE), Phe374, and Arg377.

In the N-terminal section; belongs to the IspD/TarI cytidylyltransferase family. IspD subfamily. It in the C-terminal section; belongs to the IspF family. It depends on a divalent metal cation as a cofactor.

It carries out the reaction 2-C-methyl-D-erythritol 4-phosphate + CTP + H(+) = 4-CDP-2-C-methyl-D-erythritol + diphosphate. The catalysed reaction is 4-CDP-2-C-methyl-D-erythritol 2-phosphate = 2-C-methyl-D-erythritol 2,4-cyclic diphosphate + CMP. It participates in isoprenoid biosynthesis; isopentenyl diphosphate biosynthesis via DXP pathway; isopentenyl diphosphate from 1-deoxy-D-xylulose 5-phosphate: step 2/6. Its pathway is isoprenoid biosynthesis; isopentenyl diphosphate biosynthesis via DXP pathway; isopentenyl diphosphate from 1-deoxy-D-xylulose 5-phosphate: step 4/6. Functionally, bifunctional enzyme that catalyzes the formation of 4-diphosphocytidyl-2-C-methyl-D-erythritol from CTP and 2-C-methyl-D-erythritol 4-phosphate (MEP) (IspD), and catalyzes the conversion of 4-diphosphocytidyl-2-C-methyl-D-erythritol 2-phosphate (CDP-ME2P) to 2-C-methyl-D-erythritol 2,4-cyclodiphosphate (ME-CPP) with a corresponding release of cytidine 5-monophosphate (CMP) (IspF). The sequence is that of Bifunctional enzyme IspD/IspF from Bartonella henselae (strain ATCC 49882 / DSM 28221 / CCUG 30454 / Houston 1) (Rochalimaea henselae).